The following is a 238-amino-acid chain: Ribonuclease M (238 aa).

Intrachain disulfides connect C5–C22, C13–C58, C21–C126, C66–C118, and C191–C225. H51 is an active-site residue. N-linked (GlcNAc...) asparagine glycosylation is present at N74. Active-site residues include E111 and H115.

The protein belongs to the RNase T2 family.

The enzyme catalyses a ribonucleotidyl-ribonucleotide-RNA + H2O = a 3'-end 3'-phospho-ribonucleotide-RNA + a 5'-end dephospho-ribonucleoside-RNA + H(+). In terms of biological role, this is a base non-specific and adenylic acid preferential ribonuclease. The protein is Ribonuclease M of Aspergillus phoenicis (Aspergillus saitoi).